We begin with the raw amino-acid sequence, 114 residues long: MSAPKPTRSQGDLAEMLEMLLDKGVVINADIAVSIGDTELLGIELRAAVASFETAAQYGLEFPTGTDMERVEEAAGISPDESRSLDTRSESEQMDELPGEAGASVSNTAPQEEE.

The interval 63-114 (PTGTDMERVEEAAGISPDESRSLDTRSESEQMDELPGEAGASVSNTAPQEEE) is disordered. The span at 80 to 91 (DESRSLDTRSES) shows a compositional bias: basic and acidic residues. A compositionally biased stretch (polar residues) spans 104 to 114 (SVSNTAPQEEE).

The protein belongs to the gas vesicle GvpA family. As to quaternary structure, gvpF to GvpM interact with each other in vitro, and may form multi-subunit complex(es). Interacts with GvpA.

The protein localises to the gas vesicle. Its function is as follows. A minor component of the gas vesicle, proteins GvpF to GvpM might be involved in nucleating gas vesicle formation. Gas vesicles are hollow, gas filled proteinaceous nanostructures found in some microorganisms. They allow positioning of halobacteria at the optimal depth for growth in the poorly aerated, shallow brine pools of their habitat. Expression of a 9.5 kb mc-vac DNA fragment containing 2 divergently transcribed regions (gvpD-gvpE-gvpF-gvpG-gvpH-gvpI-gvpJ-gvpK-gvpL-gvpM and gvpA-gvpC-gvpN-gvpO) allows H.volcanii to produce gas vesicles. This Haloferax mediterranei (strain ATCC 33500 / DSM 1411 / JCM 8866 / NBRC 14739 / NCIMB 2177 / R-4) (Halobacterium mediterranei) protein is Gas vesicle protein J.